Consider the following 257-residue polypeptide: Snake venom serine protease KN1 (257 aa).

Residues 1–18 (MVLIRVLANLLILQLSYA) form the signal peptide. The propeptide occupies 19-24 (QKSSEL). The Peptidase S1 domain occupies 25–248 (VVGGHPCNIN…HLDWIKSIIA (224 aa)). Cystine bridges form between Cys31/Cys162, Cys49/Cys65, Cys141/Cys209, Cys173/Cys188, and Cys199/Cys224. Catalysis depends on His64, which acts as the Charge relay system. The N-linked (GlcNAc...) asparagine glycan is linked to Asn102. The Charge relay system role is filled by Asp109. N-linked (GlcNAc...) asparagine glycans are attached at residues Asn120 and Asn121. The Charge relay system role is filled by Ser203.

The protein belongs to the peptidase S1 family. Snake venom subfamily. Monomer. As to expression, expressed by the venom gland.

The protein localises to the secreted. Its function is as follows. Snake venom serine protease that may act in the hemostasis system of the prey. In Trimeresurus stejnegeri (Chinese green tree viper), this protein is Snake venom serine protease KN1.